We begin with the raw amino-acid sequence, 150 residues long: 3-dehydroquinate dehydratase (150 aa).

Y26 functions as the Proton acceptor in the catalytic mechanism. Substrate is bound by residues N77, H83, and D90. Catalysis depends on H103, which acts as the Proton donor. Substrate-binding positions include L104 to S105 and R114.

The protein belongs to the type-II 3-dehydroquinase family. Homododecamer.

The enzyme catalyses 3-dehydroquinate = 3-dehydroshikimate + H2O. It functions in the pathway metabolic intermediate biosynthesis; chorismate biosynthesis; chorismate from D-erythrose 4-phosphate and phosphoenolpyruvate: step 3/7. In terms of biological role, catalyzes a trans-dehydration via an enolate intermediate. The chain is 3-dehydroquinate dehydratase from Klebsiella pneumoniae (strain 342).